Reading from the N-terminus, the 170-residue chain is Crossover junction endodeoxyribonuclease RuvC (170 aa).

Catalysis depends on residues Asp-8, Glu-67, and Asp-139. The Mg(2+) site is built by Asp-8, Glu-67, and Asp-139.

This sequence belongs to the RuvC family. Homodimer which binds Holliday junction (HJ) DNA. The HJ becomes 2-fold symmetrical on binding to RuvC with unstacked arms; it has a different conformation from HJ DNA in complex with RuvA. In the full resolvosome a probable DNA-RuvA(4)-RuvB(12)-RuvC(2) complex forms which resolves the HJ. The cofactor is Mg(2+).

It is found in the cytoplasm. It catalyses the reaction Endonucleolytic cleavage at a junction such as a reciprocal single-stranded crossover between two homologous DNA duplexes (Holliday junction).. In terms of biological role, the RuvA-RuvB-RuvC complex processes Holliday junction (HJ) DNA during genetic recombination and DNA repair. Endonuclease that resolves HJ intermediates. Cleaves cruciform DNA by making single-stranded nicks across the HJ at symmetrical positions within the homologous arms, yielding a 5'-phosphate and a 3'-hydroxyl group; requires a central core of homology in the junction. The consensus cleavage sequence is 5'-(A/T)TT(C/G)-3'. Cleavage occurs on the 3'-side of the TT dinucleotide at the point of strand exchange. HJ branch migration catalyzed by RuvA-RuvB allows RuvC to scan DNA until it finds its consensus sequence, where it cleaves and resolves the cruciform DNA. The sequence is that of Crossover junction endodeoxyribonuclease RuvC from Pectobacterium atrosepticum (strain SCRI 1043 / ATCC BAA-672) (Erwinia carotovora subsp. atroseptica).